Here is a 350-residue protein sequence, read N- to C-terminus: Formimidoylglutamase (350 aa).

Mn(2+) is bound by residues H130, D165, H167, D169, D269, and D271.

It belongs to the arginase family. Mn(2+) serves as cofactor.

The enzyme catalyses N-formimidoyl-L-glutamate + H2O = formamide + L-glutamate. Its pathway is amino-acid degradation; L-histidine degradation into L-glutamate; L-glutamate from N-formimidoyl-L-glutamate (hydrolase route): step 1/1. Its function is as follows. Catalyzes the conversion of N-formimidoyl-L-glutamate to L-glutamate and formamide. This chain is Formimidoylglutamase, found in Aliivibrio fischeri (strain ATCC 700601 / ES114) (Vibrio fischeri).